The following is a 109-amino-acid chain: Protein reprimo (109 aa).

Residues Asn7 and Asn18 are each glycosylated (N-linked (GlcNAc...) asparagine). Residues 56–76 (VVQIAVMCVLSLTVVFGIFFL) form a helical membrane-spanning segment. Residue Ser98 is modified to Phosphoserine.

The protein belongs to the reprimo family.

It is found in the cytoplasm. It localises to the membrane. Functionally, may be involved in the regulation of p53-dependent G2 arrest of the cell cycle. Seems to induce cell cycle arrest by inhibiting CDK1 activity and nuclear translocation of the CDC2 cyclin B1 complex. This Homo sapiens (Human) protein is Protein reprimo (RPRM).